A 439-amino-acid chain; its full sequence is Xylose isomerase (439 aa).

Active-site residues include H100 and D103. Positions 231, 267, 270, 295, 306, 308, and 338 each coordinate Mg(2+).

Belongs to the xylose isomerase family. As to quaternary structure, homotetramer. Mg(2+) is required as a cofactor.

It localises to the cytoplasm. The enzyme catalyses alpha-D-xylose = alpha-D-xylulofuranose. This is Xylose isomerase from Rhodopirellula baltica (strain DSM 10527 / NCIMB 13988 / SH1).